We begin with the raw amino-acid sequence, 502 residues long: Betaine aldehyde dehydrogenase, chloroplastic (502 aa).

A chloroplast-targeting transit peptide spans 1 to 7 (MAFPIPA). 240–245 (GSSATG) contacts NAD(+). Glu262 acts as the Proton acceptor in catalysis. The Nucleophile role is filled by Cys296.

It belongs to the aldehyde dehydrogenase family. Homodimer.

It is found in the plastid. The protein resides in the chloroplast. It carries out the reaction betaine aldehyde + NAD(+) + H2O = glycine betaine + NADH + 2 H(+). Its pathway is amine and polyamine biosynthesis; betaine biosynthesis via choline pathway; betaine from betaine aldehyde: step 1/1. The chain is Betaine aldehyde dehydrogenase, chloroplastic from Atriplex hortensis (Mountain spinach).